We begin with the raw amino-acid sequence, 466 residues long: mRNA-capping enzyme subunit alpha (466 aa).

The active-site N6-GMP-lysine intermediate is K67. Residues R408–I466 form a disordered region. Positions K413–Q443 are enriched in polar residues. Acidic residues predominate over residues D448–P459.

Belongs to the eukaryotic GTase family. As to quaternary structure, heterodimer. The mRNA-capping enzyme is composed of two separate chains alpha and beta, respectively a mRNA guanylyltransferase and an mRNA 5'-triphosphate monophosphatase.

The protein localises to the nucleus. It catalyses the reaction a 5'-end diphospho-ribonucleoside in mRNA + GTP + H(+) = a 5'-end (5'-triphosphoguanosine)-ribonucleoside in mRNA + diphosphate. Functionally, second step of mRNA capping. Transfer of the GMP moiety of GTP to the 5'-end of RNA via an enzyme-GMP covalent reaction intermediate. The protein is mRNA-capping enzyme subunit alpha (CEG1) of Kluyveromyces lactis (strain ATCC 8585 / CBS 2359 / DSM 70799 / NBRC 1267 / NRRL Y-1140 / WM37) (Yeast).